A 137-amino-acid chain; its full sequence is Small ribosomal subunit protein uS11 (137 aa).

Residues Glu-116 to Val-137 are disordered.

It belongs to the universal ribosomal protein uS11 family. As to quaternary structure, part of the 30S ribosomal subunit.

Functionally, located on the platform of the 30S subunit. The chain is Small ribosomal subunit protein uS11 from Methanopyrus kandleri (strain AV19 / DSM 6324 / JCM 9639 / NBRC 100938).